Reading from the N-terminus, the 801-residue chain is Phenylalanine--tRNA ligase beta subunit (801 aa).

Positions 39-147 (GGGLDQVVVA…SDLPLGVPLF (109 aa)) constitute a tRNA-binding domain. The region spanning 401–477 (VSHRTIRFRV…RLNGYDRIET (77 aa)) is the B5 domain. Mg(2+)-binding residues include D455, D461, E464, and E465. In terms of domain architecture, FDX-ACB spans 708-801 (SRFPDTFRDI…LVAKLGATIR (94 aa)).

Belongs to the phenylalanyl-tRNA synthetase beta subunit family. Type 1 subfamily. As to quaternary structure, tetramer of two alpha and two beta subunits. The cofactor is Mg(2+).

It localises to the cytoplasm. The catalysed reaction is tRNA(Phe) + L-phenylalanine + ATP = L-phenylalanyl-tRNA(Phe) + AMP + diphosphate + H(+). This chain is Phenylalanine--tRNA ligase beta subunit, found in Geobacter sulfurreducens (strain ATCC 51573 / DSM 12127 / PCA).